A 377-amino-acid chain; its full sequence is Mechanosensory abnormality protein 6 (377 aa).

Residues 1-13 are Cytoplasmic-facing; it reads MGLQSAAAHFINR. The chain crosses the membrane as a helical span at residues 14 to 34; sequence FIIWITIFMVACFLLRLLVVL. The Extracellular portion of the chain corresponds to 35 to 377; sequence DLNKRVYNHT…HCDLTHSYIT (343 aa). Cys-48 and Cys-369 are oxidised to a cystine. Asn-94 carries an N-linked (GlcNAc...) asparagine glycan.

The protein belongs to the paraoxonase family. Component of a non-voltage-gated amiloride-sensitive cation channel complex (also called the degenerin channel complex) composed of at least the mec-2, mec-4, mec-6 and mec-10 subunits; the complex mediates mechanotransduction in touch cells. Interacts with mec-2, mec-4 and mec-10. Post-translationally, glycosylated. Expressed in neurons including the six touch receptors, ventral cord motor neurons, HSN, PVD, PVC, IL1, and several neurons near the nerve ring, in the anal ganglion and in the male tail sensory rays, in muscles including the body wall, vulval, intestinal, anal depressor and sphincter muscles, and in the excretory canal.

Its subcellular location is the cell membrane. The protein resides in the cell projection. It is found in the axon. Functionally, subunit of an amiloride-sensitive cation channel (degenerin channel complex) permeable for sodium, potassium, lithium and N-methylglucamine, and required for mechanosensory transduction (touch sensitivity). Interacts with degenerin channel proteins and stabilizes the channel. Plays a role in mechanosensory transduction (touch sensitivity). The polypeptide is Mechanosensory abnormality protein 6 (Caenorhabditis elegans).